Consider the following 796-residue polypeptide: Protein translocase subunit SecA 2 (796 aa).

Residues glutamine 84, 102–106 (GEGKT), and aspartate 496 each bind ATP.

This sequence belongs to the SecA family. Monomer and homodimer (Potential). Part of the accessory SecA2/SecY2 protein translocation apparatus required to export cell wall protein SraP.

It is found in the cell membrane. The protein resides in the cytoplasm. It carries out the reaction ATP + H2O + cellular proteinSide 1 = ADP + phosphate + cellular proteinSide 2.. Part of the accessory SecA2/SecY2 system specifically required to export SraP, a serine-rich repeat cell wall protein encoded upstream in the same operon. The sequence is that of Protein translocase subunit SecA 2 from Staphylococcus aureus (strain NCTC 8325 / PS 47).